The primary structure comprises 310 residues: Porphobilinogen deaminase (310 aa).

An S-(dipyrrolylmethanemethyl)cysteine modification is found at Cys-242.

It belongs to the HMBS family. As to quaternary structure, monomer. It depends on dipyrromethane as a cofactor.

The enzyme catalyses 4 porphobilinogen + H2O = hydroxymethylbilane + 4 NH4(+). It participates in porphyrin-containing compound metabolism; protoporphyrin-IX biosynthesis; coproporphyrinogen-III from 5-aminolevulinate: step 2/4. Tetrapolymerization of the monopyrrole PBG into the hydroxymethylbilane pre-uroporphyrinogen in several discrete steps. This Halorhodospira halophila (strain DSM 244 / SL1) (Ectothiorhodospira halophila (strain DSM 244 / SL1)) protein is Porphobilinogen deaminase.